The following is a 420-amino-acid chain: UPF0053 protein HI_0107 (420 aa).

Residues 2–190 enclose the CNNM transmembrane domain; the sequence is DSIPLSTLFI…GEATPNEQHP (189 aa). 4 consecutive transmembrane segments (helical) span residues 3–23, 65–85, 92–112, and 126–146; these read SIPL…SAYF, FILI…TVIG, AGVA…SEIF, and FFSS…VWLM. CBS domains lie at 208–268 and 273–333; these read MVPR…KNEF and LIRA…FTTS.

This sequence belongs to the UPF0053 family.

It localises to the cell membrane. The chain is UPF0053 protein HI_0107 from Haemophilus influenzae (strain ATCC 51907 / DSM 11121 / KW20 / Rd).